The sequence spans 463 residues: Hexose-6-phosphate:phosphate antiporter (463 aa).

The Cytoplasmic segment spans residues 1 to 24; the sequence is MLAFLNQVRKPTLDLPLEVRRKMW. The helical transmembrane segment at 25 to 45 threads the bilayer; the sequence is FKPFMQSYLVVFIGYLTMYLI. The Periplasmic portion of the chain corresponds to 46-60; sequence RKNFNIAQNDMISTY. The chain crosses the membrane as a helical span at residues 61-81; that stretch reads GLSMTQLGMIGLGFSITYGVG. Residues 82–96 are Cytoplasmic-facing; sequence KTLVSYYADGKNTKQ. The chain crosses the membrane as a helical span at residues 97-117; it reads FLPFMLILSAICMLGFSASMG. Over 118–120 the chain is Periplasmic; the sequence is SGS. A helical membrane pass occupies residues 121–141; sequence VSLFLMIAFYALSGFFQSTGG. Residues 142-159 lie on the Cytoplasmic side of the membrane; it reads SCSYSTITKWTPRRKRGT. Residues 160–180 traverse the membrane as a helical segment; the sequence is FLGFWNISHNLGGAGAAGVAL. Residues 181–189 lie on the Periplasmic side of the membrane; the sequence is FGANYLFDG. A helical membrane pass occupies residues 190–210; that stretch reads HVIGMFIFPSIIALIVGFIGL. Over 211–259 the chain is Cytoplasmic; sequence RYGSDSPESYGLGKAEELFGEEISEEDKETESTDMTKWQIFVEYVLKNK. The chain crosses the membrane as a helical span at residues 260-280; the sequence is VIWLLCFANIFLYVVRIGIDQ. The Periplasmic segment spans residues 281 to 297; sequence WSTVYAFQELKLSKAVA. The helical transmembrane segment at 298–318 threads the bilayer; that stretch reads IQGFTLFEAGALVGTLLWGWL. The Cytoplasmic portion of the chain corresponds to 319-326; sequence SDLANGRR. The chain crosses the membrane as a helical span at residues 327 to 347; it reads GLVACIALALIIATLGVYQHA. The Periplasmic segment spans residues 348–357; it reads SNEYIYLASL. Residues 358-378 form a helical membrane-spanning segment; the sequence is FALGFLVFGPQLLIGVAAVGF. Residues 379–382 lie on the Cytoplasmic side of the membrane; sequence VPKK. The helical transmembrane segment at 383-403 threads the bilayer; sequence AIGAADGIKGTFAYLIGDSFA. The Periplasmic segment spans residues 404-425; the sequence is KLGLGMIADGTPVFGLTGWAGT. A helical membrane pass occupies residues 426–446; sequence FAALDIAAIGCICLMAIVAVM. Over 447–463 the chain is Cytoplasmic; that stretch reads EERKIRREKKIQQLTVA.

Belongs to the major facilitator superfamily. Organophosphate:Pi antiporter (OPA) (TC 2.A.1.4) family.

The protein resides in the cell inner membrane. Functionally, mediates the exchange of external hexose 6-phosphate and internal inorganic phosphate. This Escherichia coli O157:H7 protein is Hexose-6-phosphate:phosphate antiporter (uhpT).